The primary structure comprises 284 residues: Bifunctional protein FolD (284 aa).

NADP(+)-binding positions include 165–167 (GRS) and S190.

Belongs to the tetrahydrofolate dehydrogenase/cyclohydrolase family. Homodimer.

The catalysed reaction is (6R)-5,10-methylene-5,6,7,8-tetrahydrofolate + NADP(+) = (6R)-5,10-methenyltetrahydrofolate + NADPH. It catalyses the reaction (6R)-5,10-methenyltetrahydrofolate + H2O = (6R)-10-formyltetrahydrofolate + H(+). It participates in one-carbon metabolism; tetrahydrofolate interconversion. Catalyzes the oxidation of 5,10-methylenetetrahydrofolate to 5,10-methenyltetrahydrofolate and then the hydrolysis of 5,10-methenyltetrahydrofolate to 10-formyltetrahydrofolate. The chain is Bifunctional protein FolD from Streptococcus pyogenes serotype M28 (strain MGAS6180).